Here is a 201-residue protein sequence, read N- to C-terminus: 3-isopropylmalate dehydratase small subunit (201 aa).

This sequence belongs to the LeuD family. LeuD type 1 subfamily. As to quaternary structure, heterodimer of LeuC and LeuD.

The catalysed reaction is (2R,3S)-3-isopropylmalate = (2S)-2-isopropylmalate. Its pathway is amino-acid biosynthesis; L-leucine biosynthesis; L-leucine from 3-methyl-2-oxobutanoate: step 2/4. Catalyzes the isomerization between 2-isopropylmalate and 3-isopropylmalate, via the formation of 2-isopropylmaleate. The chain is 3-isopropylmalate dehydratase small subunit from Escherichia coli O127:H6 (strain E2348/69 / EPEC).